A 200-amino-acid polypeptide reads, in one-letter code: Small ribosomal subunit protein uS4 (200 aa).

The interval 22–42 (TGKELQKRPYPPGQHGPGQRR) is disordered. The S4 RNA-binding domain maps to 92–152 (SRLDNLVYRL…EKSRNLQVIK (61 aa)).

This sequence belongs to the universal ribosomal protein uS4 family. As to quaternary structure, part of the 30S ribosomal subunit. Contacts protein S5. The interaction surface between S4 and S5 is involved in control of translational fidelity.

One of the primary rRNA binding proteins, it binds directly to 16S rRNA where it nucleates assembly of the body of the 30S subunit. In terms of biological role, with S5 and S12 plays an important role in translational accuracy. This chain is Small ribosomal subunit protein uS4 (rpsD), found in Geobacillus stearothermophilus (Bacillus stearothermophilus).